Reading from the N-terminus, the 1281-residue chain is Enterobactin synthase component F (1281 aa).

The segment at 1 to 301 (MSQHLPLVAA…NVLPLGIHIA (301 aa)) is elongation/condensation. Positions 486 to 891 (SYREMHEQVV…ALPDVKQAVT (406 aa)) are adenylation. Positions 975 to 1050 (APKAGSETII…KLATIIDGEE (76 aa)) constitute a Carrier domain. O-(pantetheine 4'-phosphoryl)serine is present on Ser-1010. The segment at 1070–1281 (PTLFCFHPAS…GPIIRATLNR (212 aa)) is thioesterase. His-1259 acts as the Proton acceptor; for thioesterase activity in catalysis.

It belongs to the ATP-dependent AMP-binding enzyme family. EntF subfamily. Proteins EntB, EntD, EntE and EntF are the component of the enterobactin synthase. Components probably do not form a stable complex. EntF acts as a catalytic monomer. The cofactor is pantetheine 4'-phosphate. 4'-phosphopantetheine is transferred from CoA to a specific serine of apo-EntF by EntD. Holo-EntF so formed is then acylated with seryl-AMP.

The protein localises to the cytoplasm. The catalysed reaction is 3 2,3-dihydroxybenzoate + 3 L-serine + 6 ATP = enterobactin + 6 AMP + 6 diphosphate + 4 H(+). The enzyme catalyses holo-[peptidyl-carrier protein] + L-serine + ATP = L-seryl-[peptidyl-carrier protein] + AMP + diphosphate. The protein operates within siderophore biosynthesis; enterobactin biosynthesis. Its function is as follows. Involved in the biosynthesis of the siderophore enterobactin (enterochelin), which is a macrocyclic trimeric lactone of N-(2,3-dihydroxybenzoyl)-serine. EntF catalyzes the activation of L-serine via ATP-dependent PPi exchange reaction to form seryladenylate. Activated L-serine is loaded onto the peptidyl carrier domain via a thioester linkage to the phosphopanthetheine moiety, forming seryl-S-Ppant-EntF. EntF acts then as the sole catalyst for the formation of the three amide and three ester linkages found in enterobactin, using seryladenylate and 2,3-dihydroxybenzoate-S-Ppant-EntB (DHB-S-Ppant-EntB) as substrates, via the formation of a DHB-Ser-S-Ppant-EntF intermediate. This chain is Enterobactin synthase component F (entF), found in Shigella flexneri.